A 376-amino-acid chain; its full sequence is Polycomb group protein FIE1 (376 aa).

WD repeat units lie at residues 85-127, 130-170, 176-216, 242-279, 291-332, and 339-376; these read DKDE…LLKT, GHGD…CILI, GHRN…PYVE, VHSNYVDCTRWLGDFILSKSVDNEIVLWEPKTKEQSPG, VPEC…PVLT, and QCKSAIRQTAVSFDGSTILACSEDGSIWRWDEVDHPKA.

The protein belongs to the WD repeat ESC family. As to quaternary structure, interacts with EZ1. Component of the polycomb repressive complex 2 (PRC2), composed of the core PRC2 components EMF2B, EZ1 and CLF. PRC2 methylates 'Lys-27' residues of histone H3 (H3K27me3), leading to transcriptional repression of the affected target gene. Widely expressed.

Functionally, polycomb group (PcG) protein. PcG proteins act by forming multiprotein complexes, which are required to maintain the transcriptionally repressive state of homeotic genes throughout development. PcG proteins are not required to initiate repression, but to maintain it during later stages of development. They act via the methylation of histones, rendering chromatin heritably changed in its expressibility. Involved in the regulation of seed endosperm development, grain filling and seed dormancy. FIE2-containing PcG complex in seed endosperm regulates the expression of various transcription factors by trimethylation on histone H3 'Lys-27' (H3K27me3) of target genes. Involved in the overall expression regulation of a large number of nutrient metabolism genes. Involved in the regulation of seed endosperm development. Involved in the regulation of vegetative development, particularly in stem cell maintenance in the root system, where it maintains the suppression of key differentiation regulators. In Oryza sativa subsp. japonica (Rice), this protein is Polycomb group protein FIE1.